The sequence spans 67 residues: Guanine nucleotide-binding protein G(I)/G(S)/G(O) subunit gamma-13 (67 aa).

At Cys64 the chain carries Cysteine methyl ester. Cys64 carries S-farnesyl cysteine lipidation. Positions 65–67 are cleaved as a propeptide — removed in mature form; sequence TIL.

It belongs to the G protein gamma family. As to quaternary structure, g proteins are composed of 3 units, alpha, beta and gamma.

It is found in the cell membrane. Functionally, guanine nucleotide-binding proteins (G proteins) are involved as a modulator or transducer in various transmembrane signaling systems. The beta and gamma chains are required for the GTPase activity, for replacement of GDP by GTP, and for G protein-effector interaction. This chain is Guanine nucleotide-binding protein G(I)/G(S)/G(O) subunit gamma-13 (GNG13), found in Homo sapiens (Human).